Consider the following 504-residue polypeptide: Maturase K (504 aa).

This sequence belongs to the intron maturase 2 family. MatK subfamily.

It is found in the plastid. The protein resides in the chloroplast. Usually encoded in the trnK tRNA gene intron. Probably assists in splicing its own and other chloroplast group II introns. The chain is Maturase K from Lupinus argenteus (Silvery lupine).